We begin with the raw amino-acid sequence, 636 residues long: LDL receptor repeat-containing protein egg-1 (636 aa).

Over 1–130 (MSSIAQKNRN…NHSNLFQCPS (130 aa)) the chain is Cytoplasmic. A helical; Signal-anchor for type II membrane protein membrane pass occupies residues 131–151 (VAIVLVLALVILGVLAAIPLT). Residues 152-636 (LMLTSSAQKM…VLKNSGRFPY (485 aa)) lie on the Extracellular side of the membrane. Asn202 carries an N-linked (GlcNAc...) asparagine glycan. 8 LDL-receptor class A domains span residues 205-243 (TCSGFGFACTGAVHMVIPSSKRCDGFKDCQDGSDEENCK), 244-296 (ECQS…AMCK), 298-335 (TCSKDQFKCNGSNACLPLSAKCDGVKDCSDGSDENNCN), 336-375 (KCQKGAHVSLVSRNIKHLFASHVCDGVAQCADRSDEQQCD), 378-415 (TCSGSDKALCDDGTCIKRSQVCDGKKDCSDGMDEENCP), 457-499 (KCHP…KNCT), 503-541 (ECGIDNASQFTCDRKCVDASRRCDGVWDCEDKSDEQNCS), and 542-579 (QCASGSIKCSADKKCLPAYTRCNGVAECSDGSDELKCS). Cystine bridges form between Cys213/Cys233, Cys227/Cys242, Cys245/Cys273, Cys251/Cys286, Cys280/Cys295, Cys299/Cys312, Cys306/Cys325, Cys319/Cys334, Cys337/Cys365, Cys359/Cys374, Cys379/Cys392, Cys387/Cys405, Cys399/Cys414, Cys458/Cys476, Cys466/Cys489, Cys483/Cys498, Cys504/Cys518, Cys514/Cys531, Cys525/Cys540, Cys543/Cys556, Cys550/Cys569, and Cys563/Cys578. N-linked (GlcNAc...) asparagine glycosylation occurs at Asn508. An N-linked (GlcNAc...) asparagine glycan is attached at Asn614.

The protein resides in the cell membrane. In terms of biological role, probable receptor which is required for the oocyte-to-zygote transition although its exact function is controversial. Seems to be required for fertilization probably by promoting the interaction or fusion between sperm and oocyte. Conversely, shown to be dispensable for fertilization but required for the formation of a continuous and cohesive eggshell chitin layer by maintaining a homogenous distribution of chitin synthase chs-1 at the unfertilized oocyte cell membrane. Appears to recruit or maintain together to the unfertilized oocyte cortex several proteins including chs-1, kinase mbk-2 and pseudophosphatases egg-3, and possibly egg-4 and egg-5. This is LDL receptor repeat-containing protein egg-1 from Caenorhabditis briggsae.